The sequence spans 102 residues: Small ribosomal subunit protein uS14m (102 aa).

Belongs to the universal ribosomal protein uS14 family.

The protein resides in the mitochondrion. The sequence is that of Small ribosomal subunit protein uS14m (RPS14) from Paramecium tetraurelia.